The chain runs to 429 residues: Inositol-3-phosphate synthase 1 (429 aa).

A helical transmembrane segment spans residues 12-32; the sequence is LGVLVVGVGGAVATTMIVGTL. 11 residues coordinate NAD(+): Ala-22, Val-23, Asp-79, Ala-116, Ala-165, Thr-167, Tyr-201, Ser-244, Arg-276, Asp-277, and Lys-290.

The protein belongs to the myo-inositol 1-phosphate synthase family. Homotetramer. Requires NAD(+) as cofactor.

It localises to the membrane. The enzyme catalyses D-glucose 6-phosphate = 1D-myo-inositol 3-phosphate. It functions in the pathway polyol metabolism; myo-inositol biosynthesis; myo-inositol from D-glucose 6-phosphate: step 1/2. Its function is as follows. Key enzyme in myo-inositol biosynthesis pathway that catalyzes the conversion of glucose 6-phosphate to 1D-myo-inositol 3-phosphate in a NAD-dependent manner. In Bacteroides thetaiotaomicron (strain ATCC 29148 / DSM 2079 / JCM 5827 / CCUG 10774 / NCTC 10582 / VPI-5482 / E50), this protein is Inositol-3-phosphate synthase 1.